The following is a 314-amino-acid chain: Putative S-adenosyl-L-methionine-dependent methyltransferase MRA_3805 (314 aa).

S-adenosyl-L-methionine contacts are provided by residues aspartate 132 and 161 to 162; that span reads DL.

Belongs to the UPF0677 family.

Its function is as follows. Exhibits S-adenosyl-L-methionine-dependent methyltransferase activity. This chain is Putative S-adenosyl-L-methionine-dependent methyltransferase MRA_3805, found in Mycobacterium tuberculosis (strain ATCC 25177 / H37Ra).